We begin with the raw amino-acid sequence, 439 residues long: Chromosomal replication initiator protein DnaA (439 aa).

Residues 1–75 are domain I, interacts with DnaA modulators; the sequence is MESWSRCLER…GIREVVLAIG (75 aa). The interval 75–101 is domain II; that stretch reads GSRPKTTELTVPVDTTGRLSQTVPFNG. A domain III, AAA+ region region spans residues 102–319; sequence NLDTHYNFDN…GALNTLVARA (218 aa). The ATP site is built by Gly147, Gly149, Lys150, and Thr151. The domain IV, binds dsDNA stretch occupies residues 320–439; it reads NFTGRAVTIE…WDKLMRKFSE (120 aa).

It belongs to the DnaA family. In terms of assembly, oligomerizes as a right-handed, spiral filament on DNA at oriC.

It is found in the cytoplasm. In terms of biological role, plays an essential role in the initiation and regulation of chromosomal replication. ATP-DnaA binds to the origin of replication (oriC) to initiate formation of the DNA replication initiation complex once per cell cycle. Binds the DnaA box (a 9 base pair repeat at the origin) and separates the double-stranded (ds)DNA. Forms a right-handed helical filament on oriC DNA; dsDNA binds to the exterior of the filament while single-stranded (ss)DNA is stabiized in the filament's interior. The ATP-DnaA-oriC complex binds and stabilizes one strand of the AT-rich DNA unwinding element (DUE), permitting loading of DNA polymerase. After initiation quickly degrades to an ADP-DnaA complex that is not apt for DNA replication. Binds acidic phospholipids. This is Chromosomal replication initiator protein DnaA from Xylella fastidiosa (strain Temecula1 / ATCC 700964).